The sequence spans 92 residues: Transcription factor PRE1 (92 aa).

The 56-residue stretch at 4–59 (RRSRQSSSAPRISDNQMIDLVSKLRQILPEIGQRRRSDKASASKVLQETCNYIRNL) folds into the bHLH domain.

As to quaternary structure, interacts with IBH1 and HFR1. Expressed in roots, leaves, stems and flowers.

It localises to the nucleus. Its function is as follows. Atypical and probable non DNA-binding bHLH transcription factor that integrates multiple signaling pathways to regulate cell elongation and plant development. Binds IBH1, forming a pair of antagonistic bHLH transcription factors that function downstream of BZR1 to mediate brassinosteroid regulation of cell elongation. Regulates light responses by binding and inhibiting the activity of the bHLH transcription factor HFR1, a critical regulator of light signaling and shade avoidance. May have a regulatory role in various aspects of gibberellin-dependent growth and development. This Arabidopsis thaliana (Mouse-ear cress) protein is Transcription factor PRE1 (PRE1).